We begin with the raw amino-acid sequence, 455 residues long: MEKWTKENVLKILPVDDESAAMITSTALAVDSSEAAKDYWISLLGDSAETIEFISDFNQKRFHSTHSGNSPSIMKNKKNVTPNNNIRQKNTATSSHPSFYIANNKQKGYDEEMYKVNPASRNKSQSNNISSHEKSSKTTKNVSPGVMTSDLIPEKKSVKHNNSSSNRIEGLADIEKAIRQIEISQNINKAERRVCNCQGRKHPLNEAAPNCLNCGKIICIVEGIGPCTFCDNPVISKAQQLELIQELKHEGSRLKQAANQKRKSKTVSSKNNFQRLQNSSLHSIFLDPKQLEQKAQEAEERKNVLLNFDRTSAQRTRIIDEAADFDPTSLASDTWASPAEKALNLVRMQKAMAKKEKKKKKVLSISLSGKKVVVDQKEASSESSDEDQDELDNLTKVEGQSHSHNPKAPVIRNLPRPIYHQDLHSSHVAVPESILNKINQKWSKVQDDDGMPSML.

2 disordered regions span residues 64 to 98 and 118 to 148; these read STHS…SHPS and PASR…GVMT. Polar residues-rich tracts occupy residues 65-98 and 119-130; these read THSG…SHPS and ASRNKSQSNNIS. Residue Ser70 is modified to Phosphoserine. At Ser380 the chain carries Phosphoserine.

In terms of assembly, component of the RQT (ribosome quality control trigger) complex.

Its subcellular location is the cytoplasm. The protein resides in the cytosol. Probably functions as part of the RQC trigger (RQT) complex that activates the ribosome quality control (RQC) pathway, a pathway that degrades nascent peptide chains during problematic translation. This is RQC trigger complex subunit RQT4 homolog from Schizosaccharomyces pombe (strain 972 / ATCC 24843) (Fission yeast).